We begin with the raw amino-acid sequence, 790 residues long: Threonine--tRNA ligase 2, cytoplasmic (790 aa).

Ala2 bears the N-acetylalanine mark. The stretch at 13 to 68 (SRLQRQEEDIRWLCAEVQRLRDEQLRGPERGQAEGPRLTREVAQLQAENRDLHQRL) forms a coiled coil. The interval 80–117 (RTEAGRAAAHEPPTQNQEKDTKKKRLKQSEPGREVKQP) is disordered. The segment covering 96–117 (QEKDTKKKRLKQSEPGREVKQP) has biased composition (basic and acidic residues). The 63-residue stretch at 148-210 (NVISVRVAGG…EGDSTVELLM (63 aa)) folds into the TGS domain. Ser441 bears the Phosphoserine mark. Positions 774–780 (KLKNLKK) match the Nuclear localization signal motif.

This sequence belongs to the class-II aminoacyl-tRNA synthetase family. As to quaternary structure, may be a component of the multisynthetase complex (MSC), a large multi-subunit complex which contains at least eight different aminoacyl-tRNA synthetases plus three auxillary subunits AIMP1, AIMP2 and EEF1E1. Interacts with the MSC components EPRS1, AIMP1, AIMP2 and KARS1. In terms of tissue distribution, ubiquitous (at protein level). Strongly expressed in muscle (at protein level). Moderately expressed in heart and liver (at protein level). Weakly expressed in stomach, kidney, testis, spleen, brain, fat and lung (at protein level).

The protein resides in the cytoplasm. Its subcellular location is the nucleus. It catalyses the reaction tRNA(Thr) + L-threonine + ATP = L-threonyl-tRNA(Thr) + AMP + diphosphate + H(+). Its function is as follows. Catalyzes the attachment of threonine to tRNA(Thr) in a two-step reaction: threonine is first activated by ATP to form Thr-AMP and then transferred to the acceptor end of tRNA(Thr). Also edits incorrectly charged tRNA(Thr) via its editing domain, at the post-transfer stage. This is Threonine--tRNA ligase 2, cytoplasmic (Tars3) from Mus musculus (Mouse).